We begin with the raw amino-acid sequence, 292 residues long: Elongation factor Ts (292 aa).

The segment at 81–84 (TDFV) is involved in Mg(2+) ion dislocation from EF-Tu.

Belongs to the EF-Ts family.

The protein resides in the cytoplasm. Its function is as follows. Associates with the EF-Tu.GDP complex and induces the exchange of GDP to GTP. It remains bound to the aminoacyl-tRNA.EF-Tu.GTP complex up to the GTP hydrolysis stage on the ribosome. This is Elongation factor Ts from Acidithiobacillus ferrooxidans (strain ATCC 23270 / DSM 14882 / CIP 104768 / NCIMB 8455) (Ferrobacillus ferrooxidans (strain ATCC 23270)).